We begin with the raw amino-acid sequence, 129 residues long: MAEQKKEKWGIVHIYSSYNNTIIHATDITGAETIARVSGGRVTRNQRDEGSPYAAMQAAFKLAEVLKERGIENIHIKVRAPGGSGQKNPGPGAQAAIRALARAGLRIGRIEDVTPVPHDGTTPKKRFKK.

This sequence belongs to the universal ribosomal protein uS11 family. As to quaternary structure, part of the 30S ribosomal subunit.

Its function is as follows. Located on the platform of the 30S subunit. This is Small ribosomal subunit protein uS11 from Methanocaldococcus jannaschii (strain ATCC 43067 / DSM 2661 / JAL-1 / JCM 10045 / NBRC 100440) (Methanococcus jannaschii).